The chain runs to 545 residues: CTP synthase (545 aa).

Residues 1–266 (MTTNYIFVTG…DDYICKRFSL (266 aa)) are amidoligase domain. Position 14 (S14) interacts with CTP. Residue S14 coordinates UTP. ATP-binding positions include 15–20 (SLGKGI) and D72. D72 and E140 together coordinate Mg(2+). CTP contacts are provided by residues 147-149 (DIE), 187-192 (KTKPTQ), and K223. Residues 187 to 192 (KTKPTQ) and K223 contribute to the UTP site. An ATP-binding site is contributed by 239–241 (KDV). The Glutamine amidotransferase type-1 domain maps to 291–542 (TIGMVGKYIE…VKAASEFQKR (252 aa)). L-glutamine is bound at residue G352. The active-site Nucleophile; for glutamine hydrolysis is C379. Residues 380–383 (LGMQ), E403, and R470 each bind L-glutamine. Catalysis depends on residues H515 and E517.

This sequence belongs to the CTP synthase family. Homotetramer.

It catalyses the reaction UTP + L-glutamine + ATP + H2O = CTP + L-glutamate + ADP + phosphate + 2 H(+). The catalysed reaction is L-glutamine + H2O = L-glutamate + NH4(+). It carries out the reaction UTP + NH4(+) + ATP = CTP + ADP + phosphate + 2 H(+). It participates in pyrimidine metabolism; CTP biosynthesis via de novo pathway; CTP from UDP: step 2/2. Allosterically activated by GTP, when glutamine is the substrate; GTP has no effect on the reaction when ammonia is the substrate. The allosteric effector GTP functions by stabilizing the protein conformation that binds the tetrahedral intermediate(s) formed during glutamine hydrolysis. Inhibited by the product CTP, via allosteric rather than competitive inhibition. Catalyzes the ATP-dependent amination of UTP to CTP with either L-glutamine or ammonia as the source of nitrogen. Regulates intracellular CTP levels through interactions with the four ribonucleotide triphosphates. In Shigella boydii serotype 18 (strain CDC 3083-94 / BS512), this protein is CTP synthase.